Reading from the N-terminus, the 164-residue chain is Phosphopantetheine adenylyltransferase (164 aa).

Residue Ser-10 coordinates substrate. Residues 10-11 and His-18 contribute to the ATP site; that span reads SF. Residues Lys-42, Leu-74, and Arg-88 each coordinate substrate. ATP-binding positions include 89 to 91, Glu-99, and 124 to 130; these read GLR and YSFLSSS.

This sequence belongs to the bacterial CoaD family. Homohexamer. Mg(2+) is required as a cofactor.

It is found in the cytoplasm. The enzyme catalyses (R)-4'-phosphopantetheine + ATP + H(+) = 3'-dephospho-CoA + diphosphate. Its pathway is cofactor biosynthesis; coenzyme A biosynthesis; CoA from (R)-pantothenate: step 4/5. Reversibly transfers an adenylyl group from ATP to 4'-phosphopantetheine, yielding dephospho-CoA (dPCoA) and pyrophosphate. This is Phosphopantetheine adenylyltransferase from Exiguobacterium sp. (strain ATCC BAA-1283 / AT1b).